We begin with the raw amino-acid sequence, 609 residues long: MSETFNSSEFLKTVTSSPGVYRMYDVDNIVIYVGKAKDLKKRLSSYFRKNLTNVKTQALVARIANIDVTITHSETDALILENDYIKQYMPKYNVLLRDDKSYPYILLSNHKHPRLSYHRGPKRAKGQYFGPYPNGGAVRESLHLLQKIFPIRQCDDLYYKARSRPCLQYQIGRCSAPCVDNVSLKDYQEQVALASLFLKGKDQQVTKALVAKMEQAAVELNYEQAARYRDQITALRRVAEQQEVSHSSGDMDVIGAHFASGVACFHLLFIREGKIFGSRSYYPKVPVDTELSEVLRAFMFQFYLNSDSQRVTPKEILVSDAFEEQAELAGAINTAQQRKVEIKSQVRGERAQFLRLALTNATNAVNTRLAHRNTVEQRFLLLEEAIEVSHKIQRMECFDISHTMGESTVSSCVVFNREGPNKADYRRYNIEGITPGDDYAAMKQAISRRFDKVAKAGKTPDILFIDGGIGQLRIAQKVVDEKFVALDHAPTLIGVAKGEGRKPGLETLIYGENEESFTLPADSGALHLIQQIRDESHRFAITGHRNKRQKTRNTSTLESIEGVGPKRRKALLQHLGGLQEVKSASVTELVKVPGISLEMAQTIHDALRG.

A GIY-YIG domain is found at 16 to 94 (SSPGVYRMYD…IKQYMPKYNV (79 aa)). Residues 203 to 238 (QQVTKALVAKMEQAAVELNYEQAARYRDQITALRRV) enclose the UVR domain.

Belongs to the UvrC family. As to quaternary structure, interacts with UvrB in an incision complex.

The protein localises to the cytoplasm. Its function is as follows. The UvrABC repair system catalyzes the recognition and processing of DNA lesions. UvrC both incises the 5' and 3' sides of the lesion. The N-terminal half is responsible for the 3' incision and the C-terminal half is responsible for the 5' incision. This chain is UvrABC system protein C, found in Shewanella piezotolerans (strain WP3 / JCM 13877).